The following is a 98-amino-acid chain: Large ribosomal subunit protein eL21 (98 aa).

Positions 1 to 24 are enriched in basic residues; that stretch reads MVKKAHSFRRKTRGKLSKHPRRRG. The tract at residues 1 to 27 is disordered; that stretch reads MVKKAHSFRRKTRGKLSKHPRRRGLPP.

This sequence belongs to the eukaryotic ribosomal protein eL21 family.

This chain is Large ribosomal subunit protein eL21, found in Thermococcus gammatolerans (strain DSM 15229 / JCM 11827 / EJ3).